We begin with the raw amino-acid sequence, 370 residues long: Flagellar P-ring protein (370 aa).

Residues 1–21 form the signal peptide; sequence MRLFSVVLAVFTLLLPSQAFA.

The protein belongs to the FlgI family. As to quaternary structure, the basal body constitutes a major portion of the flagellar organelle and consists of four rings (L,P,S, and M) mounted on a central rod.

The protein localises to the periplasm. The protein resides in the bacterial flagellum basal body. Assembles around the rod to form the L-ring and probably protects the motor/basal body from shearing forces during rotation. The chain is Flagellar P-ring protein from Alteromonas mediterranea (strain DSM 17117 / CIP 110805 / LMG 28347 / Deep ecotype).